The sequence spans 513 residues: L-threonine dehydratase biosynthetic IlvA (513 aa).

N6-(pyridoxal phosphate)lysine is present on K61. Pyridoxal 5'-phosphate is bound by residues N88, 187 to 191 (GGGGL), and S314. ACT-like domains follow at residues 338–409 (ALLA…DLSN) and 432–504 (RLYS…DVTE).

It belongs to the serine/threonine dehydratase family. Homotetramer. Pyridoxal 5'-phosphate is required as a cofactor.

It carries out the reaction L-threonine = 2-oxobutanoate + NH4(+). Its pathway is amino-acid biosynthesis; L-isoleucine biosynthesis; 2-oxobutanoate from L-threonine: step 1/1. Its function is as follows. Catalyzes the anaerobic formation of alpha-ketobutyrate and ammonia from threonine in a two-step reaction. The first step involved a dehydration of threonine and a production of enamine intermediates (aminocrotonate), which tautomerizes to its imine form (iminobutyrate). Both intermediates are unstable and short-lived. The second step is the nonenzymatic hydrolysis of the enamine/imine intermediates to form 2-ketobutyrate and free ammonia. In the low water environment of the cell, the second step is accelerated by RidA. This is L-threonine dehydratase biosynthetic IlvA (ilvA) from Pasteurella multocida (strain Pm70).